The following is a 381-amino-acid chain: Creatine kinase M-type (381 aa).

Residues Lys11–Gly98 form the Phosphagen kinase N-terminal domain. Residues Gly99–Gly118 are disordered. One can recognise a Phosphagen kinase C-terminal domain in the interval Tyr125–Leu367. ATP-binding positions include Ser128–Arg132, His191, Arg236, Arg292, Arg320–Val325, and Asp335.

This sequence belongs to the ATP:guanido phosphotransferase family. In terms of assembly, dimer of identical or non-identical chains, which can be either B (brain type) or M (muscle type). With MM being the major form in skeletal muscle and myocardium, MB existing in myocardium, and BB existing in many tissues, especially brain. Predominantly found in skeletal muscle, but not in the heart.

The protein resides in the cytoplasm. The enzyme catalyses creatine + ATP = N-phosphocreatine + ADP + H(+). In terms of biological role, reversibly catalyzes the transfer of phosphate between ATP and various phosphogens (e.g. creatine phosphate). Creatine kinase isoenzymes play a central role in energy transduction in tissues with large, fluctuating energy demands, such as skeletal muscle, heart, brain and spermatozoa. The sequence is that of Creatine kinase M-type from Gallus gallus (Chicken).